The following is a 336-amino-acid chain: Ribosomal RNA large subunit methyltransferase F (336 aa).

The protein belongs to the methyltransferase superfamily. METTL16/RlmF family.

The protein resides in the cytoplasm. The catalysed reaction is adenosine(1618) in 23S rRNA + S-adenosyl-L-methionine = N(6)-methyladenosine(1618) in 23S rRNA + S-adenosyl-L-homocysteine + H(+). Its function is as follows. Specifically methylates the adenine in position 1618 of 23S rRNA. The polypeptide is Ribosomal RNA large subunit methyltransferase F (Yersinia pestis (strain Pestoides F)).